We begin with the raw amino-acid sequence, 258 residues long: UDP-N-acetylenolpyruvoylglucosamine reductase (258 aa).

Residue Arg-142 is part of the active site. Ser-184 acts as the Proton donor in catalysis. Glu-254 is an active-site residue.

Belongs to the MurB family. FAD is required as a cofactor.

Its subcellular location is the cytoplasm. The catalysed reaction is UDP-N-acetyl-alpha-D-muramate + NADP(+) = UDP-N-acetyl-3-O-(1-carboxyvinyl)-alpha-D-glucosamine + NADPH + H(+). Its pathway is cell wall biogenesis; peptidoglycan biosynthesis. Functionally, cell wall formation. The chain is UDP-N-acetylenolpyruvoylglucosamine reductase from Campylobacter jejuni (strain RM1221).